The chain runs to 40 residues: Chaperonin HSP60, mitochondrial (40 aa).

Belongs to the chaperonin (HSP60) family.

It localises to the mitochondrion. In terms of biological role, implicated in mitochondrial protein import and macromolecular assembly. May facilitate the correct folding of imported proteins. May also prevent misfolding and promote the refolding and proper assembly of unfolded polypeptides generated under stress conditions in the mitochondrial matrix. The sequence is that of Chaperonin HSP60, mitochondrial from Solanum tuberosum (Potato).